The sequence spans 159 residues: Globin D, coelomic (159 aa).

Gly2 bears the N-acetylglycine mark. The 147-residue stretch at 12-158 folds into the Globin domain; it reads DLTPAEKDLI…VQGVLITKHA (147 aa). The heme b site is built by His74 and His105.

Belongs to the globin family. Homodimer.

The sequence is that of Globin D, coelomic from Molpadia arenicola (Sea cucumber).